The chain runs to 102 residues: Small ribosomal subunit protein uS10 (102 aa).

It belongs to the universal ribosomal protein uS10 family. In terms of assembly, part of the 30S ribosomal subunit.

Involved in the binding of tRNA to the ribosomes. The chain is Small ribosomal subunit protein uS10 from Methanosphaera stadtmanae (strain ATCC 43021 / DSM 3091 / JCM 11832 / MCB-3).